The primary structure comprises 250 residues: 7-carboxy-7-deazaguanine synthase (250 aa).

Substrate-binding positions include 15 to 17 (VQG) and R30. One can recognise a Radical SAM core domain in the interval 21–250 (LIGLRQVFIR…PQTHRFMGQL (230 aa)). C34, C38, and C41 together coordinate [4Fe-4S] cluster. Residue T43 participates in Mg(2+) binding. Position 96 (T96) interacts with substrate. G98 is an S-adenosyl-L-methionine binding site.

Belongs to the radical SAM superfamily. 7-carboxy-7-deazaguanine synthase family. As to quaternary structure, homodimer. [4Fe-4S] cluster serves as cofactor. Requires S-adenosyl-L-methionine as cofactor. It depends on Mg(2+) as a cofactor.

It carries out the reaction 6-carboxy-5,6,7,8-tetrahydropterin + H(+) = 7-carboxy-7-deazaguanine + NH4(+). The protein operates within purine metabolism; 7-cyano-7-deazaguanine biosynthesis. In terms of biological role, catalyzes the complex heterocyclic radical-mediated conversion of 6-carboxy-5,6,7,8-tetrahydropterin (CPH4) to 7-carboxy-7-deazaguanine (CDG), a step common to the biosynthetic pathways of all 7-deazapurine-containing compounds. The sequence is that of 7-carboxy-7-deazaguanine synthase from Geobacter sulfurreducens (strain ATCC 51573 / DSM 12127 / PCA).